A 480-amino-acid chain; its full sequence is MNKKISFIINGRVEIFPESDDLVQSINFGDNSVHLPVLNDSQVKNIIDYNENNELQLHNIINFLYTVGQRWKNEEYSRRRTYIRDLKRYMGYSEEMAKLEANWISMILCSKGGLYDLVKNELGSRHIMDEWLPQDESYIRAFPKGKSVHLLTGNVPLSGVLSILRAILTKNQCIIKTSSTDPFTANALALSFIDVDPHHPVTRSLSVVYWQHQGDISLAKEIMQHADVVVAWGGEDAINWAVKHAPPDIDVMKFGPKKSFCIIDNPVDLVSAATGAAHDVCFYDQQACFSTQNIYYMGSHYEEFKLALIEKLNLYAHILPNTKKDFDEKAAYSLVQKECLFAGLKVEVDVHQRWMVIESNAGVELNQPLGRCVYLHHVDNIEQILPYVRKNKTQTISVFPWEAALKYRDLLALKGAERIVEAGMNNIFRVGGAHDGMRPLQRLVTYISHERPSHYTAKDVAVEIEQTRFLEEDKFLVFVP.

This sequence belongs to the LuxC family.

It carries out the reaction a long-chain fatty aldehyde + NADP(+) + CoA = a long-chain fatty acyl-CoA + NADPH + H(+). It functions in the pathway lipid metabolism; fatty acid reduction for biolumincescence. LuxC is the fatty acid reductase enzyme responsible for synthesis of the aldehyde substrate for the luminescent reaction catalyzed by luciferase. The polypeptide is Long-chain acyl-protein thioester reductase (luxC) (Photorhabdus luminescens (Xenorhabdus luminescens)).